A 293-amino-acid chain; its full sequence is 4-diphosphocytidyl-2-C-methyl-D-erythritol kinase (293 aa).

The active site involves Lys-16. 99–109 (PMGAGLGGGSS) lines the ATP pocket. Residue Asp-141 is part of the active site.

This sequence belongs to the GHMP kinase family. IspE subfamily.

The enzyme catalyses 4-CDP-2-C-methyl-D-erythritol + ATP = 4-CDP-2-C-methyl-D-erythritol 2-phosphate + ADP + H(+). It participates in isoprenoid biosynthesis; isopentenyl diphosphate biosynthesis via DXP pathway; isopentenyl diphosphate from 1-deoxy-D-xylulose 5-phosphate: step 3/6. Its function is as follows. Catalyzes the phosphorylation of the position 2 hydroxy group of 4-diphosphocytidyl-2C-methyl-D-erythritol. The protein is 4-diphosphocytidyl-2-C-methyl-D-erythritol kinase of Burkholderia pseudomallei (strain 668).